The following is a 176-amino-acid chain: Prepronociceptin (176 aa).

Positions 1–19 are cleaved as a signal peptide; the sequence is MKILFCDLLLLSLFSSVSS. 2 propeptides span residues 20–95 and 169–176; these read SCQK…MQHL and TLHQNGNA.

It belongs to the opioid neuropeptide precursor family. Post-translationally, specific enzymatic cleavages at paired basic residues probably yield other active peptides besides nociceptin. The N-terminal domain contains 6 conserved cysteines thought to be involved in disulfide bonding and/or processing.

It is found in the secreted. Its function is as follows. Ligand of the opioid receptor-like receptor OPRL1. It may act as a transmitter in the brain by modulating nociceptive and locomotor behavior. May be involved in neuronal differentiation and development. Blocks nociceptin action in pain transmission by inhibiting nociceptin-induced hyperalgesia and allodynia. Functionally, has potent analgesic activity. The polypeptide is Prepronociceptin (PNOC) (Bos taurus (Bovine)).